A 462-amino-acid polypeptide reads, in one-letter code: Cysteine proteinase RD21A (462 aa).

Residues 1–21 form the signal peptide; sequence MGFLKPTMAILFLAMVAVSSA. Positions 22–136 are cleaved as a propeptide — activation peptide; it reads VDMSIISYDE…LRYEARVGDE (115 aa). A glycan (N-linked (GlcNAc...) asparagine) is linked at N90. 5 cysteine pairs are disulfide-bonded: C158-C200, C192-C233, C291-C342, C375-C387, and C381-C402. Residue C161 is part of the active site. Residues H297 and N317 contribute to the active site. Residues 353–462 constitute a propeptide, removed in mature form; the sequence is KNGENPPNPG…FWSQGRKNIA (110 aa). A glycan (N-linked (GlcNAc...) asparagine) is linked at N414.

Belongs to the peptidase C1 family. Interacts with SERPIN1. Interacts with PRN2. Interacts with WSCP. Interacts with TZF4, TZF5 and TZF6.

Its subcellular location is the vacuole. It is found in the golgi apparatus. The protein resides in the cytoplasm. It localises to the stress granule. The protein localises to the P-body. With respect to regulation, inhibited by the cysteine protease inhibitor E64 (L-trans-epoxysuccinyl-leucylamide-(4-guanido)-butane). Cysteine protease that plays a role in immunity, senescence, and biotic and abiotic stresses. Involved in immunity against the necrotrophic fungal pathogen Botrytis cinerea. Involved in elicitor-stimulated programmed cell death (PCD). During infection by the necrotrophic fungal pathogen Botrytis cinerea, functions as a PCD-promoting protease that is released from the ER body or vacuole to the cytoplasm. Accumulates in endoplasmic reticulum-derived bodies in epidermal cells and may participate in cell death in stressed or injured cells. Involved in water stress-induced cell death through its protease activity that is released to the cytoplasm after vacuolar collapse. Possesses protease activity in vitro and is involved in cell death in the transmitting tract and septum epidermis during flower development. Possesses peptide ligase activity. Can ligate peptides to unmodified N-termini of acceptor proteins. Probably ligates through a thioester intermediate. The chain is Cysteine proteinase RD21A from Arabidopsis thaliana (Mouse-ear cress).